Consider the following 162-residue polypeptide: Protein NrdI (162 aa).

The protein belongs to the NrdI family.

Its function is as follows. Probably involved in ribonucleotide reductase function. This is Protein NrdI from Streptococcus pyogenes serotype M28 (strain MGAS6180).